The following is a 56-amino-acid chain: UPF0391 membrane protein Bd1438 (56 aa).

2 consecutive transmembrane segments (helical) span residues 4–24 (AAIA…SGVA) and 33–53 (ILLF…LVSG).

The protein belongs to the UPF0391 family.

It localises to the cell membrane. The chain is UPF0391 membrane protein Bd1438 from Bdellovibrio bacteriovorus (strain ATCC 15356 / DSM 50701 / NCIMB 9529 / HD100).